The sequence spans 130 residues: Small ribosomal subunit protein uS8 (130 aa).

It belongs to the universal ribosomal protein uS8 family.

The sequence is that of Small ribosomal subunit protein uS8 (RPS15A) from Strongylocentrotus purpuratus (Purple sea urchin).